We begin with the raw amino-acid sequence, 179 residues long: Large ribosomal subunit protein uL5 (179 aa).

It belongs to the universal ribosomal protein uL5 family. In terms of assembly, part of the 50S ribosomal subunit; part of the 5S rRNA/L5/L18/L25 subcomplex. Contacts the 5S rRNA and the P site tRNA. Forms a bridge to the 30S subunit in the 70S ribosome.

Its function is as follows. This is one of the proteins that bind and probably mediate the attachment of the 5S RNA into the large ribosomal subunit, where it forms part of the central protuberance. In the 70S ribosome it contacts protein S13 of the 30S subunit (bridge B1b), connecting the 2 subunits; this bridge is implicated in subunit movement. Contacts the P site tRNA; the 5S rRNA and some of its associated proteins might help stabilize positioning of ribosome-bound tRNAs. The polypeptide is Large ribosomal subunit protein uL5 (Xylella fastidiosa (strain M23)).